The sequence spans 268 residues: Fibroblast growth factor 8 (268 aa).

An N-terminal signal peptide occupies residues Met1 to Ala22. Gln23 bears the Pyrrolidone carboxylic acid mark. The tract at residues Gln29 to Arg87 is disordered. N-linked (GlcNAc...) asparagine glycosylation occurs at Asn60. Basic and acidic residues predominate over residues Glu71 to Val80. N-linked (GlcNAc...) asparagine glycosylation is present at Asn190.

Belongs to the heparin-binding growth factors family. Monomer. Homodimer. Interacts with FGFR1, FGFR2, FGFR3 and FGFR4. Affinity between fibroblast growth factors (FGFs) and their receptors is increased by heparan sulfate glycosaminoglycans that function as coreceptors. In terms of processing, the N-terminus is blocked. As to expression, absent in normal mammary glands and detected only in adult testis and ovary and in midgestational embryos.

The protein localises to the secreted. In terms of biological role, plays an important role in the regulation of embryonic development, cell proliferation, cell differentiation and cell migration. Required for normal brain, eye, ear and limb development during embryogenesis. Required for normal development of the gonadotropin-releasing hormone (GnRH) neuronal system. Plays a role in neurite outgrowth in hippocampal cells. Cooperates with Wnt-1 in mouse mammary tumor virus-induced murine mammary tumorigenesis. This is Fibroblast growth factor 8 (Fgf8) from Mus musculus (Mouse).